We begin with the raw amino-acid sequence, 342 residues long: Ribosomal RNA small subunit methyltransferase C (342 aa).

This sequence belongs to the methyltransferase superfamily. RsmC family. In terms of assembly, monomer.

The protein resides in the cytoplasm. The catalysed reaction is guanosine(1207) in 16S rRNA + S-adenosyl-L-methionine = N(2)-methylguanosine(1207) in 16S rRNA + S-adenosyl-L-homocysteine + H(+). In terms of biological role, specifically methylates the guanine in position 1207 of 16S rRNA in the 30S particle. This chain is Ribosomal RNA small subunit methyltransferase C, found in Salmonella gallinarum (strain 287/91 / NCTC 13346).